We begin with the raw amino-acid sequence, 629 residues long: Protein SPT2 homolog (629 aa).

The segment at 1-522 (MDFDSVLSIA…SGHRILVKPS (522 aa)) is important for interaction with DNA. Residues 45-72 (QAFLKKKAVEQKNKEQQDKKAKEDLLAK) adopt a coiled-coil conformation. The span at 53-93 (VEQKNKEQQDKKAKEDLLAKRVELKSDRKARAMASRTKDNF) shows a compositional bias: basic and acidic residues. 3 disordered regions span residues 53–181 (VEQK…ASSS), 206–533 (KTEE…TSSY), and 608–629 (EDEE…KKRK). Positions 111-123 (KGSSTEEQQSSTK) are enriched in polar residues. Residues 127–144 (GDYDDEDNFDYEGTDSES) are compositionally biased toward acidic residues. The stretch at 203–228 (VVKKTEERLRTAEEIRELEMERRVKK) forms a coiled coil. Composition is skewed to basic and acidic residues over residues 206 to 247 (KTEE…KDSR) and 257 to 277 (KHVD…EKHQ). 7 stretches are compositionally biased toward polar residues: residues 278–297 (SSST…TPTS), 305–327 (SNSG…SFQA), 335–345 (SQGQRPATPSD), 353–364 (VSLTQAKSSISG), 387–398 (SNFSTSGPSQKP), 437–450 (NLQS…SRAS), and 462–490 (SGSQ…TKNI). The interval 523 to 629 (GPALPPITSS…MQRKNAKKRK (107 aa)) is important for interaction with histones. Residues 591 to 629 (WKEQQKEEARSLRMAVLEDEEEERRELEEMQRKNAKKRK) are a coiled coil.

Belongs to the SPT2 family. In terms of assembly, interacts with histones. Interacts with a heterotetrameric complex formed by histone H3 and H4, especially when the histone tetramer is not bound to DNA.

The protein localises to the nucleus. It localises to the nucleolus. Its function is as follows. Histone chaperone that stabilizes pre-existing histone tetramers and regulates replication-independent histone exchange on chromatin. Required for normal chromatin refolding in the coding region of transcribed genes, and for the suppression of spurious transcription. Binds DNA and histones and promotes nucleosome assembly (in vitro). Facilitates formation of tetrameric histone complexes containing histone H3 and H4. Modulates RNA polymerase 1-mediated transcription. Binds DNA, with a preference for branched DNA species, such as Y-form DNA and Holliday junction DNA. The polypeptide is Protein SPT2 homolog (spty2d1) (Danio rerio (Zebrafish)).